The primary structure comprises 344 residues: L-threonine 3-dehydrogenase (344 aa).

Cys-42 lines the Zn(2+) pocket. Residues Thr-44 and His-47 each act as charge relay system in the active site. His-67, Glu-68, Cys-97, Cys-100, Cys-103, and Cys-111 together coordinate Zn(2+). NAD(+) is bound by residues Ile-179, Asp-199, Arg-204, 266 to 268 (LGI), and 290 to 291 (IY).

This sequence belongs to the zinc-containing alcohol dehydrogenase family. Homotetramer. Zn(2+) serves as cofactor.

It is found in the cytoplasm. It carries out the reaction L-threonine + NAD(+) = (2S)-2-amino-3-oxobutanoate + NADH + H(+). It functions in the pathway amino-acid degradation; L-threonine degradation via oxydo-reductase pathway; glycine from L-threonine: step 1/2. In terms of biological role, catalyzes the NAD(+)-dependent oxidation of L-threonine to 2-amino-3-ketobutyrate. This Sinorhizobium medicae (strain WSM419) (Ensifer medicae) protein is L-threonine 3-dehydrogenase.